The sequence spans 135 residues: Transcription antitermination protein NusB (135 aa).

Belongs to the NusB family.

Involved in transcription antitermination. Required for transcription of ribosomal RNA (rRNA) genes. Binds specifically to the boxA antiterminator sequence of the ribosomal RNA (rrn) operons. In Shewanella pealeana (strain ATCC 700345 / ANG-SQ1), this protein is Transcription antitermination protein NusB.